A 1248-amino-acid polypeptide reads, in one-letter code: ABC transporter B family member 7 (1248 aa).

6 helical membrane-spanning segments follow: residues 32–52, 82–102, 158–175, 179–201, 261–281, and 299–321; these read IVLMVIGTLSAMANGLTQPFM, FLYLAAYAGVVSFLQVSCWMV, FTQLVSSFVGGFTVAFIV, LTLALLPCVPLIVGTGGAMTYIM, GLGIGIMMVVVYCTYGFAIWY, and VITSILTGGMALGQTLPSLNSFA. One can recognise an ABC transmembrane type-1 1 domain in the interval 35–322; the sequence is MVIGTLSAMA…TLPSLNSFAA (288 aa). Positions 357 to 593 constitute an ABC transporter 1 domain; sequence IELRDVYFRY…PEGTYSQLVR (237 aa). Position 392–399 (392–399) interacts with ATP; that stretch reads GQSGSGKS. 2 N-linked (GlcNAc...) asparagine glycosylation sites follow: Asn-473 and Asn-652. A helical membrane pass occupies residues 682–702; sequence VLLLGSLAAVIHGIVFPVQGL. Positions 683 to 970 constitute an ABC transmembrane type-1 2 domain; sequence LLLGSLAAVI…TSTMAPDINK (288 aa). N-linked (GlcNAc...) asparagine glycosylation occurs at Asn-720. The chain crosses the membrane as a helical span at residues 722–742; the sequence is SLFWALIFVALGLTDLIVIPL. Asn-779 carries an N-linked (GlcNAc...) asparagine glycan. Helical transmembrane passes span 813–833, 834–854, 914–934, and 939–959; these read IIGAFIIAFTANWLLALMALL, VAPVMFFQGYYQIKFITGFGA, GSYLALYVIESVCFLGGSWLI, and ATFGEFFQVFFALTLTAVGVT. The ABC transporter 2 domain occupies 1005 to 1242; it reads IELQHVSFRY…SGGAYASLVA (238 aa). ATP is bound at residue 1040 to 1047; the sequence is GESGSGKS. N-linked (GlcNAc...) asparagine glycosylation is found at Asn-1094, Asn-1193, and Asn-1244.

It belongs to the ABC transporter superfamily. ABCB family. Multidrug resistance exporter (TC 3.A.1.201) subfamily.

The protein localises to the membrane. The chain is ABC transporter B family member 7 (ABCB7) from Arabidopsis thaliana (Mouse-ear cress).